Here is a 238-residue protein sequence, read N- to C-terminus: MKTRPKTRIKTRVKICGIRSPKDIEFAALYGADAVGFITEVPVESPRKLDSDTAAALISKVPKCLDSVMVIMPETSTSALELIEKVKPNIVQIHSDLPLSELKAVREKADIPIIKTLSVPAEQEAPKLHNIVTRLLEEVRELEESGIVDSVLLDSGIAGKTGGTGCVHDWDLSRRIAEETELPLILAGGLKPENVQEAIRSVSPYAVDTASGVETQGKKDSVKVRKFIEEVRCTYAFL.

Belongs to the TrpF family.

The enzyme catalyses N-(5-phospho-beta-D-ribosyl)anthranilate = 1-(2-carboxyphenylamino)-1-deoxy-D-ribulose 5-phosphate. It functions in the pathway amino-acid biosynthesis; L-tryptophan biosynthesis; L-tryptophan from chorismate: step 3/5. The chain is N-(5'-phosphoribosyl)anthranilate isomerase from Methanosarcina acetivorans (strain ATCC 35395 / DSM 2834 / JCM 12185 / C2A).